Here is a 314-residue protein sequence, read N- to C-terminus: A-kinase anchor protein 7 isoform gamma (314 aa).

The interval 1–46 (MPFAAVDIQDDCGSPDVPQANPKRSKEEEEDRGDKNDHVKKRKKAK) is disordered. The span at 24-37 (RSKEEEEDRGDKND) shows a compositional bias: basic and acidic residues. Residues Thr95 and 185 to 187 (HLT) contribute to the AMP site. Residues Thr95 and 185–187 (HLT) each bind CMP. Positions 260–314 (AELVRLSKRLVENAVLKAVQQYLEETQNKKQPGEGNSTKAEEGDRNGDGSDNNRK) are PKA-RII-alpha subunit binding domain. The segment at 261-285 (ELVRLSKRLVENAVLKAVQQYLEET) is RI-alpha-binding. The RII-binding stretch occupies residues 262 to 275 (LVRLSKRLVENAVL). Positions 281–314 (YLEETQNKKQPGEGNSTKAEEGDRNGDGSDNNRK) are disordered. A compositionally biased stretch (basic and acidic residues) spans 298 to 314 (KAEEGDRNGDGSDNNRK).

As to quaternary structure, binds cAMP-dependent protein kinase (PKA). Interacts with PRKCA; only the cytoplasmic form is capable of interacting with PRKCA. In terms of tissue distribution, expressed in oocytes.

It localises to the nucleus. Its subcellular location is the cytoplasm. Functionally, probably targets cAMP-dependent protein kinase (PKA) to the cellular membrane or cytoskeletal structures. The membrane-associated form reduces epithelial sodium channel (ENaC) activity, whereas the free cytoplasmic form may negatively regulate ENaC channel feedback inhibition by intracellular sodium. This chain is A-kinase anchor protein 7 isoform gamma, found in Mus musculus (Mouse).